The chain runs to 236 residues: Chaperone protein TorD (236 aa).

The protein belongs to the TorD/DmsD family. TorD subfamily.

Its subcellular location is the cytoplasm. Its function is as follows. Involved in the biogenesis of TorA. Acts on TorA before the insertion of the molybdenum cofactor and, as a result, probably favors a conformation of the apoenzyme that is competent for acquiring the cofactor. In Colwellia psychrerythraea (strain 34H / ATCC BAA-681) (Vibrio psychroerythus), this protein is Chaperone protein TorD.